The sequence spans 604 residues: Vacuolar protein sorting-associated protein 64 (604 aa).

The segment at 1–89 is disordered; the sequence is MVELEKRRRP…SVHQVSQQQQ (89 aa). Residues 1 to 578 lie on the Cytoplasmic side of the membrane; that stretch reads MVELEKRRRP…LGVVEGKRTR (578 aa). Positions 22–34 are enriched in polar residues; the sequence is DQSNSQGMTKTPE. Composition is skewed to low complexity over residues 44–57 and 77–89; these read RARS…SRSN and SPPS…QQQQ. The 73-residue stretch at 185–257 folds into the FHA domain; the sequence is LKLGRPVTNS…NGTFVNGVKI (73 aa). A coiled-coil region spans residues 404 to 563; that stretch reads NLINMIKTLT…EEKKDTEDTL (160 aa). The interval 539–561 is disordered; the sequence is INNDNNAKVKQNDSREEKKDTED. The span at 548–560 shows a compositional bias: basic and acidic residues; that stretch reads KQNDSREEKKDTE. The helical; Anchor for type IV membrane protein transmembrane segment at 579–598 threads the bilayer; it reads VSKGMLFGVVAISFGLVATA. At 599–604 the chain is on the lumenal side; it reads VKQLPQ.

In terms of assembly, component of a complex at least composed of FAR3, FAR7, FAR8, FAR10, FAR11 and VPS64.

It is found in the endoplasmic reticulum membrane. Participates in the control of the reentry into the cell cycle following pheromone treatment. Involved in vacuolar protein sorting. This chain is Vacuolar protein sorting-associated protein 64 (VPS64), found in Saccharomyces cerevisiae (strain ATCC 204508 / S288c) (Baker's yeast).